Consider the following 282-residue polypeptide: Bifunctional protein FolD (282 aa).

Residues 165-167, S190, and T231 each bind NADP(+); that span reads GRS.

The protein belongs to the tetrahydrofolate dehydrogenase/cyclohydrolase family. Homodimer.

The catalysed reaction is (6R)-5,10-methylene-5,6,7,8-tetrahydrofolate + NADP(+) = (6R)-5,10-methenyltetrahydrofolate + NADPH. It catalyses the reaction (6R)-5,10-methenyltetrahydrofolate + H2O = (6R)-10-formyltetrahydrofolate + H(+). Its pathway is one-carbon metabolism; tetrahydrofolate interconversion. In terms of biological role, catalyzes the oxidation of 5,10-methylenetetrahydrofolate to 5,10-methenyltetrahydrofolate and then the hydrolysis of 5,10-methenyltetrahydrofolate to 10-formyltetrahydrofolate. In Clostridium botulinum (strain Alaska E43 / Type E3), this protein is Bifunctional protein FolD.